Consider the following 822-residue polypeptide: Myosin-D (822 aa).

The region spanning 95–770 (LTYGDIGGLP…AAKMLVRLQR (676 aa)) is the Myosin motor domain. ATP is bound at residue 189-196 (GESGAGKT). Residues 660–670 (SHFIRCIKPND) are actin-binding. The interval 772–822 (ALSAWEPLVGVFEGMTVLKRAKQLSTGRAVPATRICANVRRKLVQAGIKVC) is tail.

It belongs to the TRAFAC class myosin-kinesin ATPase superfamily. Myosin family.

It localises to the cell membrane. The protein resides in the cytoplasm. Myosins are actin-based motor molecules with ATPase activity. Unconventional myosins serve in intracellular movements. Their highly divergent tails are presumed to bind to membranous compartments, which would be moved relative to actin filaments. The chain is Myosin-D from Toxoplasma gondii.